Reading from the N-terminus, the 510-residue chain is Probable inositol 3-phosphate synthase isozyme 3 (510 aa).

It belongs to the myo-inositol 1-phosphate synthase family. NAD(+) serves as cofactor. As to expression, expressed in siliques, leaves, roots, seed endosperm, but not in embryos. Highest expression in roots. Confined to vascular tissue and hydathodes of leaves.

The protein resides in the cytoplasm. It carries out the reaction D-glucose 6-phosphate = 1D-myo-inositol 3-phosphate. Its pathway is polyol metabolism; myo-inositol biosynthesis; myo-inositol from D-glucose 6-phosphate: step 1/2. In terms of biological role, key enzyme in myo-inositol biosynthesis pathway that catalyzes the conversion of glucose 6-phosphate to 1-myo-inositol 1-phosphate in a NAD-dependent manner. This Arabidopsis thaliana (Mouse-ear cress) protein is Probable inositol 3-phosphate synthase isozyme 3 (IPS3).